Reading from the N-terminus, the 331-residue chain is Putative type II secretion system C-type protein YghF (331 aa).

Residues 44–60 (MFWLMLLIISAKMAHSL) traverse the membrane as a helical segment.

The protein belongs to the GSP C family.

It is found in the cell inner membrane. Functionally, involved in a type II secretion system (T2SS, formerly general secretion pathway, GSP) for the export of folded proteins across the outer membrane. In Escherichia coli (strain K12), this protein is Putative type II secretion system C-type protein YghF.